Here is a 202-residue protein sequence, read N- to C-terminus: LexA repressor (202 aa).

Positions 29–49 form a DNA-binding region, H-T-H motif; the sequence is VREICTAVGLKSTSTVHSYLE. Residues serine 125 and lysine 162 each act as for autocatalytic cleavage activity in the active site.

This sequence belongs to the peptidase S24 family. In terms of assembly, homodimer.

It carries out the reaction Hydrolysis of Ala-|-Gly bond in repressor LexA.. Functionally, represses a number of genes involved in the response to DNA damage (SOS response), including recA and lexA. In the presence of single-stranded DNA, RecA interacts with LexA causing an autocatalytic cleavage which disrupts the DNA-binding part of LexA, leading to derepression of the SOS regulon and eventually DNA repair. In Clostridium kluyveri (strain NBRC 12016), this protein is LexA repressor.